The chain runs to 1233 residues: Structural maintenance of chromosomes protein 1A (1233 aa).

32–39 (GPNGSGKS) contacts ATP. 2 coiled-coil regions span residues 104–124 (EYKINNKVVQLHEYSEELEKL) and 163–503 (ELAQ…KAEI). The span at 284–293 (IKEKDSELNQ) shows a compositional bias: basic and acidic residues. 2 disordered regions span residues 284–307 (IKEKDSELNQKRPQYIKAKENTSH) and 350–369 (FEERMEEESQSQGRDLTLEE). Phosphoserine occurs at positions 358 and 360. Residues 515 to 629 (VYGRLIDLCQ…DNVEDARRIA (115 aa)) form the SMC hinge domain. N6-acetyllysine occurs at positions 648 and 713. Residues 660-935 (KAKARRWDEK…RHNLLQACKM (276 aa)) are a coiled coil. A disordered region spans residues 946–969 (TMDDISQEEGGSQGEESVSGSQRT). Low complexity predominate over residues 953 to 967 (EEGGSQGEESVSGSQ). 4 positions are modified to phosphoserine: S957, S962, S966, and S970. A coiled-coil region spans residues 991 to 1068 (KDAQAEEEIK…FEQIKKERFD (78 aa)). Position 1037 is an N6-acetyllysine (K1037).

The protein belongs to the SMC family. SMC1 subfamily. Forms a heterodimer with SMC3 in cohesin complexes. Cohesin complexes are composed of the SMC1 (SMC1A or meiosis-specific SMC1B) and SMC3 heterodimer attached via their SMC hinge domain, RAD21 which link them, and one STAG protein (STAG1, STAG2 or meiosis-specific STAG3), which interacts with RAD21. In germ cell cohesin complexes, SMC1A is mutually exclusive with SMC1B. Found in a complex with CDCA5, SMC3 and RAD21, PDS5A/SCC-112 and PDS5B/APRIN. Interacts with STAG3, NDC80, BRAC1, BRAT1 and RPGR. Found in a complex containing POLE and SMC3. The cohesin complex interacts with the cohesin loading complex subunits NIPBL/Scc2 (via HEAT repeats) and MAU2/Scc4. NIPBL directly contacts all members of the complex, RAD21, SMC1A/B, SMC3 and STAG1. Interacts with SYCP2. Phosphorylated upon ionizing radiation or DNA methylation. Phosphorylation of Ser-957 and Ser-966 activates it and is required for S-phase checkpoint activation. In terms of processing, ubiquitinated by the DCX(DCAF15) complex, leading to its degradation.

It is found in the nucleus. Its subcellular location is the chromosome. In terms of biological role, involved in chromosome cohesion during cell cycle and in DNA repair. Central component of cohesin complex. The cohesin complex is required for the cohesion of sister chromatids after DNA replication. The cohesin complex apparently forms a large proteinaceous ring within which sister chromatids can be trapped. At anaphase, the complex is cleaved and dissociates from chromatin, allowing sister chromatids to segregate. The cohesin complex may also play a role in spindle pole assembly during mitosis. Involved in DNA repair via its interaction with BRCA1 and its related phosphorylation by ATM, or via its phosphorylation by ATR. Works as a downstream effector both in the ATM/NBS1 branch and in the ATR/MSH2 branch of S-phase checkpoint. This chain is Structural maintenance of chromosomes protein 1A (Smc1a), found in Rattus norvegicus (Rat).